Reading from the N-terminus, the 149-residue chain is Cell division protein SepF (149 aa).

Belongs to the SepF family. In terms of assembly, homodimer. Interacts with FtsZ.

The protein localises to the cytoplasm. Cell division protein that is part of the divisome complex and is recruited early to the Z-ring. Probably stimulates Z-ring formation, perhaps through the cross-linking of FtsZ protofilaments. Its function overlaps with FtsA. The protein is Cell division protein SepF of Pelotomaculum thermopropionicum (strain DSM 13744 / JCM 10971 / SI).